Consider the following 777-residue polypeptide: Ethylene receptor 4 (777 aa).

3 consecutive transmembrane segments (helical) span residues 49-69 (LLIA…ATCA), 77-97 (AVLH…LAAF), and 113-133 (AAKV…LTFI). Cu cation is bound by residues C88 and H92. The 161-residue stretch at 184 to 344 (DAHAILRTTA…VVADQAAVAL (161 aa)) folds into the GAF domain. The region spanning 387–521 (AMCHAMRRPV…NTESGACRLS (135 aa)) is the Histidine kinase domain. Residue H390 is modified to Phosphohistidine; by autocatalysis. In terms of domain architecture, Response regulatory spans 645 to 774 (RVLLADDDAM…ALGAQLCRVL (130 aa)). The residue at position 696 (D696) is a 4-aspartylphosphate.

This sequence belongs to the ethylene receptor family. Cu cation serves as cofactor.

Its subcellular location is the endoplasmic reticulum membrane. The catalysed reaction is ATP + protein L-histidine = ADP + protein N-phospho-L-histidine.. In terms of biological role, ethylene receptor related to bacterial two-component regulators. Acts as a redundant negative regulator of ethylene signaling. The chain is Ethylene receptor 4 from Oryza sativa subsp. indica (Rice).